A 295-amino-acid polypeptide reads, in one-letter code: MDTDIGSRTWHAHAKINLALHVTGRRADGYHLIDSLAVFTRFGDRVEIALADSDDFTVSGRYAPAVPLDAGNLVLKARDALRREAGSGRTPPVSIKLEKNLPIASGVGGGSSDAAAVLRGLAQTWALDIDDAGLARIGLSLGADVPMCLAAKPLVARGIGDELSMVPDFSALGLVLVNPGTPVSTADVFAALSRRDNEPLPPLPRSIDFHSLRNWLEVTRNDLEPAALALQPAIGRALSWLNKAGSGFSRMSGSGATCFGLFETGNVAKRAAAEIRSRQPDWFVAATRSMSSEAE.

Lysine 15 is an active-site residue. 102-112 (PIASGVGGGSS) serves as a coordination point for ATP. The active site involves aspartate 144.

It belongs to the GHMP kinase family. IspE subfamily.

It catalyses the reaction 4-CDP-2-C-methyl-D-erythritol + ATP = 4-CDP-2-C-methyl-D-erythritol 2-phosphate + ADP + H(+). Its pathway is isoprenoid biosynthesis; isopentenyl diphosphate biosynthesis via DXP pathway; isopentenyl diphosphate from 1-deoxy-D-xylulose 5-phosphate: step 3/6. Catalyzes the phosphorylation of the position 2 hydroxy group of 4-diphosphocytidyl-2C-methyl-D-erythritol. This chain is 4-diphosphocytidyl-2-C-methyl-D-erythritol kinase, found in Mesorhizobium japonicum (strain LMG 29417 / CECT 9101 / MAFF 303099) (Mesorhizobium loti (strain MAFF 303099)).